The primary structure comprises 419 residues: Multiple organellar RNA editing factor 1, mitochondrial (419 aa).

A mitochondrion-targeting transit peptide spans 1-60 (MAMISHRLRRALLTATSYVNRSISSSITPASDFPSVSAAVLKRSVIGRSTEVATRAPARL). Residues 174–401 (KEYGGDKYEN…AGQPGSDQVR (228 aa)) are disordered. The span at 237–252 (GPQQGYATPGQGQGTQ) shows a compositional bias: low complexity. Residues 310–327 (GQGGSGNYSQGPQGGYNQ) show a composition bias toward gly residues. Over residues 342-356 (GPASGAGNLGPAPGA) the composition is skewed to low complexity. The span at 357 to 367 (GNPGYGQGYSG) shows a compositional bias: gly residues. Over residues 371 to 401 (EQNQTFPQADQRNRDWNNNNPAGQPGSDQVR) the composition is skewed to polar residues.

The protein belongs to the MORF family. Homodimer and heterodimer with MORF3. Heterodimers with MORF8/RIP1, MORF4/RIP4 and MORF6/RIP6. Interacts with PCMP-E90/MEF13. Interacts with PCMP-H13/MEF35.

The protein localises to the mitochondrion. Involved in organellar RNA editing. Required for the processing of numerous RNA editing sites in mitochondria. Binds to the mitochondrial MEF19 and MEF21 factors, two pentatricopeptide repeat-containing proteins involved in RNA editing. The polypeptide is Multiple organellar RNA editing factor 1, mitochondrial (Arabidopsis thaliana (Mouse-ear cress)).